The following is a 99-amino-acid chain: Large ribosomal subunit protein eL42 (99 aa).

The protein belongs to the eukaryotic ribosomal protein eL42 family.

This is Large ribosomal subunit protein eL42 (RPL44) from Chlamydomonas reinhardtii (Chlamydomonas smithii).